The primary structure comprises 124 residues: Secreted RxLR effector protein 49 (124 aa).

Residues 1–22 form the signal peptide; the sequence is MIRRSPLVAVILFVAITHVVLA. Positions 57–60 match the RxLR motif; the sequence is RSLR.

The protein belongs to the RxLR effector family.

It localises to the secreted. The protein localises to the host cytoplasm. It is found in the host nucleus. Functionally, effector that acts as a broad suppressor of cell death to interrupt plant immunity. Inhibits cell death induced by cell death-inducing proteins, including the PAMP elicitor INF1 from P.infestans. The protein is Secreted RxLR effector protein 49 of Plasmopara viticola (Downy mildew of grapevine).